The sequence spans 147 residues: Ribonuclease 4 (147 aa).

The signal sequence occupies residues 1 to 28 (MDIQRTQSLLLLLLLTLLGLGLVQPSYG). The residue at position 29 (Gln29) is a Pyrrolidone carboxylic acid. The dUMP site is built by Arg35, His40, Lys68, Asn71, and Thr72. The Proton acceptor role is filled by His40. 4 cysteine pairs are disulfide-bonded: Cys53–Cys109, Cys67–Cys120, Cys85–Cys135, and Cys92–Cys99. His144 acts as the Proton donor in catalysis. Residue Phe145 participates in dUMP binding.

The protein belongs to the pancreatic ribonuclease family.

It is found in the secreted. Its function is as follows. Cleaves preferentially after uridine bases. Has antimicrobial activity against uropathogenic E.coli (UPEC). Probably contributes to urinary tract sterility. In Rattus norvegicus (Rat), this protein is Ribonuclease 4 (Rnase4).